A 203-amino-acid polypeptide reads, in one-letter code: Small ribosomal subunit protein uS4 (203 aa).

The 61-residue stretch at 93–153 folds into the S4 RNA-binding domain; sequence RRLDNVVYRL…EKSKNLQQVK (61 aa).

It belongs to the universal ribosomal protein uS4 family. Part of the 30S ribosomal subunit. Contacts protein S5. The interaction surface between S4 and S5 is involved in control of translational fidelity.

Functionally, one of the primary rRNA binding proteins, it binds directly to 16S rRNA where it nucleates assembly of the body of the 30S subunit. In terms of biological role, with S5 and S12 plays an important role in translational accuracy. The protein is Small ribosomal subunit protein uS4 of Lactobacillus delbrueckii subsp. bulgaricus (strain ATCC 11842 / DSM 20081 / BCRC 10696 / JCM 1002 / NBRC 13953 / NCIMB 11778 / NCTC 12712 / WDCM 00102 / Lb 14).